We begin with the raw amino-acid sequence, 420 residues long: Na(+)/H(+) antiporter NhaA (420 aa).

11 consecutive transmembrane segments (helical) span residues V4–I24, D70–L90, L104–F124, A132–G152, F165–Y185, P192–L212, L233–M250, V299–G319, W323–L343, L361–V381, and G395–V415.

Belongs to the NhaA Na(+)/H(+) (TC 2.A.33) antiporter family.

It localises to the cell inner membrane. The catalysed reaction is Na(+)(in) + 2 H(+)(out) = Na(+)(out) + 2 H(+)(in). In terms of biological role, na(+)/H(+) antiporter that extrudes sodium in exchange for external protons. In Jannaschia sp. (strain CCS1), this protein is Na(+)/H(+) antiporter NhaA.